Consider the following 71-residue polypeptide: Small integral membrane protein 31 (71 aa).

The helical transmembrane segment at 8–28 threads the bilayer; the sequence is LEMAFILLAFVIFSLFTLASI. Positions 31–71 are disordered; that stretch reads TPDDSNEEEEHEKKGREKKRKKSEKKKNCSEEEHRIEAVEL. The span at 46 to 55 shows a compositional bias: basic residues; the sequence is REKKRKKSEK. The span at 56-71 shows a compositional bias: basic and acidic residues; it reads KKNCSEEEHRIEAVEL. N-linked (GlcNAc...) asparagine glycosylation occurs at N58.

It localises to the membrane. The protein is Small integral membrane protein 31 of Homo sapiens (Human).